Here is a 736-residue protein sequence, read N- to C-terminus: Protein DSF2 (736 aa).

The span at Met1–Trp10 shows a compositional bias: polar residues. Disordered stretches follow at residues Met1 to Phe46, Ser178 to Pro208, Ile229 to Asn410, and Phe440 to Asn461. A compositionally biased stretch (basic and acidic residues) spans Ile14–Asn24. Polar residues-rich tracts occupy residues Ser25–Phe46 and Glu197–Pro208. The span at Asn238 to Thr256 shows a compositional bias: low complexity. Positions Lys264–Gly284 are enriched in polar residues. 3 stretches are compositionally biased toward low complexity: residues Ser285–Ser294, Lys303–Leu318, and Ser335–Asn350. Residues Lys374 to Asn385 show a composition bias toward basic residues. Positions Glu392–Asn410 are enriched in polar residues.

The chain is Protein DSF2 (DSF2) from Saccharomyces cerevisiae (strain ATCC 204508 / S288c) (Baker's yeast).